The sequence spans 193 residues: Large ribosomal subunit protein eL19A (193 aa).

The tract at residues 156-179 (QEQQDARRARAKAARQRRAKAVEE) is disordered. The span at 164–174 (ARAKAARQRRA) shows a compositional bias: basic residues.

This sequence belongs to the eukaryotic ribosomal protein eL19 family. As to quaternary structure, component of the large ribosomal subunit (LSU). Mature yeast ribosomes consist of a small (40S) and a large (60S) subunit. The 40S small subunit contains 1 molecule of ribosomal RNA (18S rRNA) and at least 33 different proteins. The large 60S subunit contains 3 rRNA molecules (25S, 5.8S and 5S rRNA) and at least 46 different proteins. eL19 lies in close proximity to the binding site for eukaryotic initiation factor eIF4G.

The protein resides in the cytoplasm. Component of the ribosome, a large ribonucleoprotein complex responsible for the synthesis of proteins in the cell. The small ribosomal subunit (SSU) binds messenger RNAs (mRNAs) and translates the encoded message by selecting cognate aminoacyl-transfer RNA (tRNA) molecules. The large subunit (LSU) contains the ribosomal catalytic site termed the peptidyl transferase center (PTC), which catalyzes the formation of peptide bonds, thereby polymerizing the amino acids delivered by tRNAs into a polypeptide chain. The nascent polypeptides leave the ribosome through a tunnel in the LSU and interact with protein factors that function in enzymatic processing, targeting, and the membrane insertion of nascent chains at the exit of the ribosomal tunnel. eL19 may play a role in the last stages of translation initiation, in particular subunit joining and shedding/releasing factors. The sequence is that of Large ribosomal subunit protein eL19A (rpl1901) from Schizosaccharomyces pombe (strain 972 / ATCC 24843) (Fission yeast).